The primary structure comprises 187 residues: UPF0398 protein SAB1311c (187 aa).

It belongs to the UPF0398 family.

The polypeptide is UPF0398 protein SAB1311c (Staphylococcus aureus (strain bovine RF122 / ET3-1)).